Reading from the N-terminus, the 703-residue chain is Pentatricopeptide repeat-containing protein At1g22830 (703 aa).

PPR repeat units follow at residues 82–116, 117–147, 148–182, 183–217, 218–248, 249–283, 284–318, 319–353, 356–386, 387–421, 422–452, 458–488, 489–523, 524–554, and 560–594; these read VLYS…GLEF, DSVL…SEIL, HPLP…GIRA, DEFT…SHRC, NLYV…MSER, DAVS…GVEA, SIVT…NVRI, GSVA…CSFS, IDNV…VEAN, SLST…GFHP, NHIT…ILRR, CLIL…MRKR, DKVT…GIKP, DHVT…MEHV, and RLEH…PSSA. Positions 595-671 are type E motif; sequence MCATLLKACL…AHEFALMETD (77 aa). The disordered stretch occupies residues 671–703; that stretch reads DSELDGENNKPMNDDSVINQEQSSDEERLVEVG.

Belongs to the PPR family. PCMP-E subfamily.

In Arabidopsis thaliana (Mouse-ear cress), this protein is Pentatricopeptide repeat-containing protein At1g22830 (PCMP-E24).